Reading from the N-terminus, the 594-residue chain is Adenine deaminase 1 (594 aa).

It belongs to the metallo-dependent hydrolases superfamily. Adenine deaminase family. Mn(2+) serves as cofactor.

The catalysed reaction is adenine + H2O + H(+) = hypoxanthine + NH4(+). This is Adenine deaminase 1 from Jannaschia sp. (strain CCS1).